The sequence spans 454 residues: UPF0210 protein Mhun_2657 (454 aa).

This sequence belongs to the UPF0210 family.

The polypeptide is UPF0210 protein Mhun_2657 (Methanospirillum hungatei JF-1 (strain ATCC 27890 / DSM 864 / NBRC 100397 / JF-1)).